The primary structure comprises 687 residues: DNA-directed RNA polymerase subunit beta' (687 aa).

Positions 69, 71, 87, and 90 each coordinate Zn(2+). 3 residues coordinate Mg(2+): aspartate 491, aspartate 493, and aspartate 495.

The protein belongs to the RNA polymerase beta' chain family. RpoC1 subfamily. In plastids the minimal PEP RNA polymerase catalytic core is composed of four subunits: alpha, beta, beta', and beta''. When a (nuclear-encoded) sigma factor is associated with the core the holoenzyme is formed, which can initiate transcription. Mg(2+) serves as cofactor. Requires Zn(2+) as cofactor.

Its subcellular location is the plastid. It is found in the chloroplast. The enzyme catalyses RNA(n) + a ribonucleoside 5'-triphosphate = RNA(n+1) + diphosphate. DNA-dependent RNA polymerase catalyzes the transcription of DNA into RNA using the four ribonucleoside triphosphates as substrates. The protein is DNA-directed RNA polymerase subunit beta' of Glycine max (Soybean).